The sequence spans 119 residues: Large ribosomal subunit protein uL22 (119 aa).

This sequence belongs to the universal ribosomal protein uL22 family. As to quaternary structure, part of the 50S ribosomal subunit.

In terms of biological role, this protein binds specifically to 23S rRNA; its binding is stimulated by other ribosomal proteins, e.g. L4, L17, and L20. It is important during the early stages of 50S assembly. It makes multiple contacts with different domains of the 23S rRNA in the assembled 50S subunit and ribosome. The globular domain of the protein is located near the polypeptide exit tunnel on the outside of the subunit, while an extended beta-hairpin is found that lines the wall of the exit tunnel in the center of the 70S ribosome. This Tropheryma whipplei (strain TW08/27) (Whipple's bacillus) protein is Large ribosomal subunit protein uL22.